The sequence spans 875 residues: Alanine--tRNA ligase (875 aa).

Zn(2+)-binding residues include His-564, His-568, Cys-666, and His-670.

It belongs to the class-II aminoacyl-tRNA synthetase family. As to quaternary structure, homotetramer. The cofactor is Zn(2+).

The protein localises to the cytoplasm. The enzyme catalyses tRNA(Ala) + L-alanine + ATP = L-alanyl-tRNA(Ala) + AMP + diphosphate. Functionally, catalyzes the attachment of alanine to tRNA(Ala) in a two-step reaction: alanine is first activated by ATP to form Ala-AMP and then transferred to the acceptor end of tRNA(Ala). Also edits incorrectly charged Ser-tRNA(Ala) and Gly-tRNA(Ala) via its editing domain. This chain is Alanine--tRNA ligase, found in Yersinia pseudotuberculosis serotype O:1b (strain IP 31758).